The sequence spans 150 residues: Putative ribosome maturation factor RimP (150 aa).

It belongs to the RimP family.

It is found in the cytoplasm. Required for maturation of 30S ribosomal subunits. This is Putative ribosome maturation factor RimP from Mycobacterium leprae (strain TN).